Reading from the N-terminus, the 170-residue chain is Small ribosomal subunit protein uS5 (170 aa).

Residues 11 to 74 (ILEKLVHINR…ETARRVLIHV (64 aa)) enclose the S5 DRBM domain.

It belongs to the universal ribosomal protein uS5 family. As to quaternary structure, part of the 30S ribosomal subunit. Contacts proteins S4 and S8.

Its function is as follows. With S4 and S12 plays an important role in translational accuracy. In terms of biological role, located at the back of the 30S subunit body where it stabilizes the conformation of the head with respect to the body. This chain is Small ribosomal subunit protein uS5, found in Pelagibacter ubique (strain HTCC1062).